The following is a 321-amino-acid chain: Glucokinase (321 aa).

8–13 lines the ATP pocket; that stretch reads ADIGGT.

It belongs to the bacterial glucokinase family.

The protein resides in the cytoplasm. It carries out the reaction D-glucose + ATP = D-glucose 6-phosphate + ADP + H(+). This chain is Glucokinase, found in Photorhabdus laumondii subsp. laumondii (strain DSM 15139 / CIP 105565 / TT01) (Photorhabdus luminescens subsp. laumondii).